The primary structure comprises 204 residues: Holliday junction branch migration complex subunit RuvA (204 aa).

Residues 1-64 (MIGRVTGILV…EDAHLLFGFS (64 aa)) form a domain I region. Positions 65-143 (HKQDRSLFRE…GLQQTDFFIK (79 aa)) are domain II. Positions 144-155 (SSHLPGIKCSKL) are flexible linker. The segment at 156–204 (DQSLQLDEAVSALIALGYKPIEAEKMVKKVLKADLTSEQLIREALKAAL) is domain III.

The protein belongs to the RuvA family. As to quaternary structure, homotetramer. Forms an RuvA(8)-RuvB(12)-Holliday junction (HJ) complex. HJ DNA is sandwiched between 2 RuvA tetramers; dsDNA enters through RuvA and exits via RuvB. An RuvB hexamer assembles on each DNA strand where it exits the tetramer. Each RuvB hexamer is contacted by two RuvA subunits (via domain III) on 2 adjacent RuvB subunits; this complex drives branch migration. In the full resolvosome a probable DNA-RuvA(4)-RuvB(12)-RuvC(2) complex forms which resolves the HJ.

The protein localises to the cytoplasm. The RuvA-RuvB-RuvC complex processes Holliday junction (HJ) DNA during genetic recombination and DNA repair, while the RuvA-RuvB complex plays an important role in the rescue of blocked DNA replication forks via replication fork reversal (RFR). RuvA specifically binds to HJ cruciform DNA, conferring on it an open structure. The RuvB hexamer acts as an ATP-dependent pump, pulling dsDNA into and through the RuvAB complex. HJ branch migration allows RuvC to scan DNA until it finds its consensus sequence, where it cleaves and resolves the cruciform DNA. The sequence is that of Holliday junction branch migration complex subunit RuvA from Histophilus somni (strain 2336) (Haemophilus somnus).